A 144-amino-acid polypeptide reads, in one-letter code: Necrosis-inducing secreted protein 1 (144 aa).

The signal sequence occupies residues 1–19; the sequence is MQFRASIAAAAGLFALANA. 3 N-linked (GlcNAc...) asparagine glycosylation sites follow: asparagine 88, asparagine 126, and asparagine 133. A BAK1/SERK3-binding region spans residues 103–132; sequence QYVVAAGLYSLYGASSSPTLSHYNVTVTVG.

It belongs to the NIS1 effector family.

It localises to the secreted. The protein resides in the host cytoplasm. Its function is as follows. Secreted effector that induces necrotic lesions in Nicotiana benthamiana. Interacts with the host receptor-like kinases (RLKs) BAK1/SERK3 and BKK1/SERK4, inhibits their kinase activity and suppresses INF1-induced pathogen-associated molecular pattern (PAMP)-triggered immunity (PTI) in N.benthamiana. Also interacts with the host receptor-like cytoplasmic kinase (RLCK) BIK1 and inhibits its kinase activity, thereby inhibiting PAMP-induced ROS generation. In PTI, phosphorylation relaying by RLKs and RLCKs is critical for the initiation of downstream signaling. In Colletotrichum higginsianum (strain IMI 349063) (Crucifer anthracnose fungus), this protein is Necrosis-inducing secreted protein 1.